A 302-amino-acid polypeptide reads, in one-letter code: N-acetylmuramic acid 6-phosphate etherase (302 aa).

The SIS domain occupies 57–220 (VSEKLKNNGR…TTAVMIKLGK (164 aa)). Glu85 acts as the Proton donor in catalysis. The active site involves Glu116.

The protein belongs to the GCKR-like family. MurNAc-6-P etherase subfamily. In terms of assembly, homodimer.

The catalysed reaction is N-acetyl-D-muramate 6-phosphate + H2O = N-acetyl-D-glucosamine 6-phosphate + (R)-lactate. Its pathway is amino-sugar metabolism; N-acetylmuramate degradation. In terms of biological role, specifically catalyzes the cleavage of the D-lactyl ether substituent of MurNAc 6-phosphate, producing GlcNAc 6-phosphate and D-lactate. This chain is N-acetylmuramic acid 6-phosphate etherase, found in Clostridium acetobutylicum (strain ATCC 824 / DSM 792 / JCM 1419 / IAM 19013 / LMG 5710 / NBRC 13948 / NRRL B-527 / VKM B-1787 / 2291 / W).